The following is a 119-amino-acid chain: Large ribosomal subunit protein uL22 (119 aa).

The protein belongs to the universal ribosomal protein uL22 family. Part of the 50S ribosomal subunit.

This protein binds specifically to 23S rRNA; its binding is stimulated by other ribosomal proteins, e.g. L4, L17, and L20. It is important during the early stages of 50S assembly. It makes multiple contacts with different domains of the 23S rRNA in the assembled 50S subunit and ribosome. Functionally, the globular domain of the protein is located near the polypeptide exit tunnel on the outside of the subunit, while an extended beta-hairpin is found that lines the wall of the exit tunnel in the center of the 70S ribosome. This is Large ribosomal subunit protein uL22 from Bifidobacterium animalis subsp. lactis (strain AD011).